A 235-amino-acid chain; its full sequence is Caveolin-1 (235 aa).

Topologically, residues 1 to 161 (MSTEQDIKTE…LVSLLALPFT (161 aa)) are cytoplasmic. The disordered stretch occupies residues 29–72 (GEAVVAPEEPKPKKNWFTFGKKKAAPTDETNIEEGGAPGDEPVK). Positions 162–182 (IIFAIFFGLLASINVFIIVPL) form an intramembrane region, helical. The Cytoplasmic segment spans residues 183–235 (GKLLSIPGTLLAKLWNWLIHAIFDPIASAVGLIFSNFNIRKYGINQETTAPCV). Residue cysteine 234 is the site of S-palmitoyl cysteine attachment.

It belongs to the caveolin family. As to quaternary structure, homooligomer containing 14-16 monomers per oligomer.

It is found in the golgi apparatus membrane. Its subcellular location is the cell membrane. The protein localises to the membrane. The protein resides in the caveola. Functionally, may act as a scaffolding protein within caveolar membranes. Interacts directly with G-protein alpha subunits and can functionally regulate their activity. This chain is Caveolin-1 (cav-1), found in Caenorhabditis elegans.